A 353-amino-acid chain; its full sequence is uncharacterized protein (353 aa).

It belongs to the mimivirus L17x/L18x family.

This is an uncharacterized protein from Acanthamoeba polyphaga (Amoeba).